Reading from the N-terminus, the 252-residue chain is Fructose-1,6-bisphosphatase/inositol-1-monophosphatase (252 aa).

Mg(2+) is bound by residues aspartate 38, threonine 40, glutamate 67, aspartate 82, leucine 84, and aspartate 85. Residues 85 to 87 (DGT), arginine 167, alanine 172, and arginine 191 each bind substrate. Aspartate 200 is a binding site for Mg(2+).

Belongs to the inositol monophosphatase superfamily. FBPase class 4 family. As to quaternary structure, homodimer. Mg(2+) is required as a cofactor. The cofactor is Mn(2+).

The catalysed reaction is beta-D-fructose 1,6-bisphosphate + H2O = beta-D-fructose 6-phosphate + phosphate. The enzyme catalyses a myo-inositol phosphate + H2O = myo-inositol + phosphate. Both FBPase and IMPase activities are inhibited by Ca(2+). In contrast to mammalian I-1-P phosphatases, is only very weakly inhibited by Li(+) (with an IC(50) of about 290 mM). Its function is as follows. Phosphatase with broad specificity; it can dephosphorylate fructose 1,6-bisphosphate, both D and L isomers of inositol-1-phosphate (I-1-P), 2'-AMP, pNPP, inositol-2-phosphate, beta-glycerol phosphate, and alpha-D-glucose-1-phosphate. Cannot hydrolyze glucose-6-phosphate and fructose-6-phosphate. May be involved in the biosynthesis of a unique osmolyte, di-myo-inositol 1,1-phosphate. The polypeptide is Fructose-1,6-bisphosphatase/inositol-1-monophosphatase (suhB) (Archaeoglobus fulgidus (strain ATCC 49558 / DSM 4304 / JCM 9628 / NBRC 100126 / VC-16)).